We begin with the raw amino-acid sequence, 484 residues long: Xylulose kinase (484 aa).

Position 77-78 (77-78 (MH)) interacts with substrate. Residue Asp233 is the Proton acceptor of the active site.

This sequence belongs to the FGGY kinase family. In terms of assembly, homodimer.

It carries out the reaction D-xylulose + ATP = D-xylulose 5-phosphate + ADP + H(+). It catalyses the reaction 1-deoxy-D-xylulose + ATP = 1-deoxy-D-xylulose 5-phosphate + ADP + H(+). Sugar binding is accompanied by a dramatic hinge-bending movement that enhances interactions with Mg-ATP. Catalyzes the phosphorylation of D-xylulose to D-xylulose 5-phosphate. Also catalyzes the phosphorylation of 1-deoxy-D-xylulose to 1-deoxy-D-xylulose 5-phosphate, with lower efficiency. Can also use D-ribulose, xylitol and D-arabitol, but D-xylulose is preferred over the other substrates. Has a weak substrate-independent Mg-ATP-hydrolyzing activity. The chain is Xylulose kinase from Escherichia coli (strain K12).